Reading from the N-terminus, the 609-residue chain is Glutamine--fructose-6-phosphate aminotransferase [isomerizing] (609 aa).

Cys2 serves as the catalytic Nucleophile; for GATase activity. One can recognise a Glutamine amidotransferase type-2 domain in the interval 2–218 (CGIVGAIAQR…EGDIAEITRR (217 aa)). 2 consecutive SIS domains span residues 286-426 (ADEL…LKGL) and 458-599 (LAED…VDQP). Lys604 acts as the For Fru-6P isomerization activity in catalysis.

As to quaternary structure, homodimer.

It is found in the cytoplasm. The enzyme catalyses D-fructose 6-phosphate + L-glutamine = D-glucosamine 6-phosphate + L-glutamate. Catalyzes the first step in hexosamine metabolism, converting fructose-6P into glucosamine-6P using glutamine as a nitrogen source. This Salmonella typhimurium (strain LT2 / SGSC1412 / ATCC 700720) protein is Glutamine--fructose-6-phosphate aminotransferase [isomerizing].